The chain runs to 614 residues: Sorting nexin-18 (614 aa).

In terms of domain architecture, SH3 spans 1-61; the sequence is MALRARALYD…PASYVQVIRA (61 aa). Residues 85–218 form a disordered region; sequence GFEPLPAAPP…SQELGHGEPQ (134 aa). Pro residues predominate over residues 90 to 101; sequence PAAPPAAFPPLL. Residues 141–151 are compositionally biased toward acidic residues; it reads SDDDWDDEWDD. Positions 266–376 constitute a PX domain; it reads FQCTIDDPTK…HFLTCPSSTD (111 aa). A 1,2-diacyl-sn-glycero-3-phospho-(1D-myo-inositol-4,5-bisphosphate)-binding residues include Arg302, Lys304, and Arg342. The BAR domain occupies 411-614; the sequence is LQEVESKIDG…EEALHKYDSV (204 aa).

Belongs to the sorting nexin family. Heterodimer with SNX9. Interacts with ITCH. Interacts with dynamin-2 (DNM2), SYNJ1 and WASL. Interacts with the AP-1 complex. Interacts with FCHSD1 (via the F-BAR domain).

The protein localises to the endomembrane system. The protein resides in the endosome membrane. Its subcellular location is the recycling endosome membrane. It localises to the cell membrane. It is found in the cytoplasmic vesicle membrane. Functionally, involved in endocytosis and intracellular vesicle trafficking, both during interphase and at the end of mitosis. Required for efficient progress through mitosis and cytokinesis. Required for normal formation of the cleavage furrow at the end of mitosis. Plays a role in endocytosis via clathrin-coated pits, but also clathrin-independent, actin-dependent fluid-phase endocytosis. Plays a role in macropinocytosis. Binds to membranes enriched in phosphatidylinositol 4,5-bisphosphate and promotes membrane tubulation. Stimulates the GTPase activity of DNM2. Promotes DNM2 location at the plasma membrane. Together with DNM2, involved in autophagosome assembly by regulating trafficking from recycling endosomes of phospholipid scramblase ATG9A. This chain is Sorting nexin-18, found in Mus musculus (Mouse).